The following is a 72-amino-acid chain: Translation initiation factor IF-1 (72 aa).

The S1-like domain maps to methionine 1–lysine 72.

Belongs to the IF-1 family. Component of the 30S ribosomal translation pre-initiation complex which assembles on the 30S ribosome in the order IF-2 and IF-3, IF-1 and N-formylmethionyl-tRNA(fMet); mRNA recruitment can occur at any time during PIC assembly.

The protein localises to the cytoplasm. One of the essential components for the initiation of protein synthesis. Stabilizes the binding of IF-2 and IF-3 on the 30S subunit to which N-formylmethionyl-tRNA(fMet) subsequently binds. Helps modulate mRNA selection, yielding the 30S pre-initiation complex (PIC). Upon addition of the 50S ribosomal subunit IF-1, IF-2 and IF-3 are released leaving the mature 70S translation initiation complex. This chain is Translation initiation factor IF-1, found in Chlorobium phaeovibrioides (strain DSM 265 / 1930) (Prosthecochloris vibrioformis (strain DSM 265)).